The following is a 125-amino-acid chain: MRALLLLSLSALLCWVSADIRCHSCYKLPVLGCVDRKSCRLEPGQQCLTTHAYIGKMWVFSRLDCGTPGEPCKPAVNQTNQKGGLTYNTTCCSQDNCNSPAPRPTPALTLVFLTSLAGLGLWLLH.

Residues 1 to 18 form the signal peptide; the sequence is MRALLLLSLSALLCWVSA. One can recognise a UPAR/Ly6 domain in the interval 20-111; that stretch reads IRCHSCYKLP…PRPTPALTLV (92 aa). Intrachain disulfides connect Cys-22–Cys-47, Cys-25–Cys-33, and Cys-39–Cys-65. Asn-88 carries an N-linked (GlcNAc...) asparagine glycan. A disulfide bond links Cys-92 and Cys-97. Ser-99 carries GPI-anchor amidated serine lipidation. Positions 100–125 are cleaved as a propeptide — removed in mature form; that stretch reads PAPRPTPALTLVFLTSLAGLGLWLLH.

In terms of processing, N-glycosylated.

The protein resides in the cell membrane. This Bos taurus (Bovine) protein is Lymphocyte antigen 6 complex locus protein G6c (LY6G6C).